The primary structure comprises 299 residues: Ribosomal protein uL3 glutamine methyltransferase (299 aa).

The protein belongs to the protein N5-glutamine methyltransferase family. PrmB subfamily.

It catalyses the reaction L-glutaminyl-[ribosomal protein uL3] + S-adenosyl-L-methionine = N(5)-methyl-L-glutaminyl-[ribosomal protein uL3] + S-adenosyl-L-homocysteine + H(+). Its function is as follows. Methylates large ribosomal subunit protein uL3 on a specific glutamine residue. The sequence is that of Ribosomal protein uL3 glutamine methyltransferase from Neisseria gonorrhoeae (strain ATCC 700825 / FA 1090).